Consider the following 342-residue polypeptide: Holliday junction branch migration complex subunit RuvB (342 aa).

Positions 1–184 (MDNERVITAV…FGIVQRLEFY (184 aa)) are large ATPase domain (RuvB-L). Residues isoleucine 23, arginine 24, glycine 65, lysine 68, threonine 69, threonine 70, 131–133 (EDY), arginine 174, tyrosine 184, and arginine 221 each bind ATP. Threonine 69 contributes to the Mg(2+) binding site. The segment at 185–255 (SVDDLSGIVS…IAQRALDMLE (71 aa)) is small ATPAse domain (RuvB-S). The segment at 258–342 (SCGLDGTDRR…PRQDGDLFND (85 aa)) is head domain (RuvB-H). DNA contacts are provided by arginine 313 and arginine 318.

This sequence belongs to the RuvB family. In terms of assembly, homohexamer. Forms an RuvA(8)-RuvB(12)-Holliday junction (HJ) complex. HJ DNA is sandwiched between 2 RuvA tetramers; dsDNA enters through RuvA and exits via RuvB. An RuvB hexamer assembles on each DNA strand where it exits the tetramer. Each RuvB hexamer is contacted by two RuvA subunits (via domain III) on 2 adjacent RuvB subunits; this complex drives branch migration. In the full resolvosome a probable DNA-RuvA(4)-RuvB(12)-RuvC(2) complex forms which resolves the HJ.

The protein resides in the cytoplasm. It carries out the reaction ATP + H2O = ADP + phosphate + H(+). The RuvA-RuvB-RuvC complex processes Holliday junction (HJ) DNA during genetic recombination and DNA repair, while the RuvA-RuvB complex plays an important role in the rescue of blocked DNA replication forks via replication fork reversal (RFR). RuvA specifically binds to HJ cruciform DNA, conferring on it an open structure. The RuvB hexamer acts as an ATP-dependent pump, pulling dsDNA into and through the RuvAB complex. RuvB forms 2 homohexamers on either side of HJ DNA bound by 1 or 2 RuvA tetramers; 4 subunits per hexamer contact DNA at a time. Coordinated motions by a converter formed by DNA-disengaged RuvB subunits stimulates ATP hydrolysis and nucleotide exchange. Immobilization of the converter enables RuvB to convert the ATP-contained energy into a lever motion, pulling 2 nucleotides of DNA out of the RuvA tetramer per ATP hydrolyzed, thus driving DNA branch migration. The RuvB motors rotate together with the DNA substrate, which together with the progressing nucleotide cycle form the mechanistic basis for DNA recombination by continuous HJ branch migration. Branch migration allows RuvC to scan DNA until it finds its consensus sequence, where it cleaves and resolves cruciform DNA. The protein is Holliday junction branch migration complex subunit RuvB of Alcanivorax borkumensis (strain ATCC 700651 / DSM 11573 / NCIMB 13689 / SK2).